Here is a 358-residue protein sequence, read N- to C-terminus: Small ribosomal subunit biogenesis GTPase RsgA (358 aa).

Residues 76 to 234 (STEIDRPAVA…LADSPGFNQP (159 aa)) enclose the CP-type G domain. Residues 125-128 (NKID) and 176-184 (GPSGVGKSS) each bind GTP. Zn(2+)-binding residues include cysteine 259, cysteine 264, histidine 266, and cysteine 272. The segment at 319 to 358 (TYEPKLANKKYRRPSRRGKNQDQERYENKTLQDIYNDDSE) is disordered. Residues 325-336 (ANKKYRRPSRRG) show a composition bias toward basic residues. The span at 337 to 348 (KNQDQERYENKT) shows a compositional bias: basic and acidic residues.

Belongs to the TRAFAC class YlqF/YawG GTPase family. RsgA subfamily. As to quaternary structure, monomer. Associates with 30S ribosomal subunit, binds 16S rRNA. It depends on Zn(2+) as a cofactor.

The protein localises to the cytoplasm. In terms of biological role, one of several proteins that assist in the late maturation steps of the functional core of the 30S ribosomal subunit. Helps release RbfA from mature subunits. May play a role in the assembly of ribosomal proteins into the subunit. Circularly permuted GTPase that catalyzes slow GTP hydrolysis, GTPase activity is stimulated by the 30S ribosomal subunit. The polypeptide is Small ribosomal subunit biogenesis GTPase RsgA (Microcystis aeruginosa (strain NIES-843 / IAM M-2473)).